We begin with the raw amino-acid sequence, 712 residues long: Golgin candidate 3 (712 aa).

The disordered stretch occupies residues 23–49 (DEEEDDLHKYGSANGVSNSDRRNSSGF). Residues 36–49 (NGVSNSDRRNSSGF) are compositionally biased toward polar residues. The stretch at 65 to 134 (AHHEIERYKA…LKEARTDISR (70 aa)) forms a coiled coil. The span at 135 to 150 (GSNNYAIKGNNDQSPN) shows a compositional bias: polar residues. Disordered stretches follow at residues 135–176 (GSNN…TDSF) and 306–347 (ESRK…MEQS). Coiled-coil stretches lie at residues 197 to 313 (QATE…LTNS), 340 to 558 (GKEE…LNRM), and 659 to 690 (LKDAEERERREAEEAAASKAKQDSERTRQEAA). The segment covering 328 to 344 (STLDKEKPESFPGKEEM) has biased composition (basic and acidic residues). The 52-residue stretch at 557–608 (RMSMESDYLVDRRIVIKLLVTYFQKNHNKEVLDLMVRMLGFSEEDKERIGAA) folds into the GRIP domain. Residues 666 to 712 (ERREAEEAAASKAKQDSERTRQEAALHDSEFSTVPLRSSESNQRLSR) form a disordered region. Residues 678 to 695 (AKQDSERTRQEAALHDSE) show a composition bias toward basic and acidic residues. Positions 696 to 712 (FSTVPLRSSESNQRLSR) are enriched in polar residues.

As to quaternary structure, interacts with ARF1; preferentially with the active form of the protein.

The protein resides in the golgi apparatus. It localises to the endosome. Functionally, golgi matrix protein playing a role in tethering of vesicles to Golgi membranes and in maintaining the overall structure of the Golgi apparatus. The chain is Golgin candidate 3 (GC3) from Arabidopsis thaliana (Mouse-ear cress).